The chain runs to 34 residues: Phallacidin proprotein 1 (34 aa).

A propeptide spanning residues 1–10 (MSDINATRLP) is cleaved from the precursor. The cyclopeptide (Ala-Pro) cross-link spans 11 to 17 (AWLVDCP). The segment at residues 12–16 (WLVDC) is a cross-link (2'-cysteinyl-6'-hydroxytryptophan sulfoxide (Trp-Cys)). Residues 18–34 (CVGDDVNRLLTRGESLC) constitute a propeptide that is removed on maturation.

Belongs to the MSDIN fungal toxin family. Post-translationally, processed by the macrocyclase-peptidase enzyme POPB to yield a toxic cyclic heptapeptide. POPB first removes 10 residues from the N-terminus. Conformational trapping of the remaining peptide forces the enzyme to release this intermediate rather than proceed to macrocyclization. The enzyme rebinds the remaining peptide in a different conformation and catalyzes macrocyclization of the N-terminal 7 residues.

Its function is as follows. Major toxin that belongs to the bicyclic heptapeptides called phallotoxins. Although structurally related to amatoxins, phallotoxins have a different mode of action, which is the stabilization of F-actin. Phallotoxins are poisonous when administered parenterally, but not orally because of poor absorption. The chain is Phallacidin proprotein 1 from Amanita bisporigera (Destroying angel).